A 247-amino-acid polypeptide reads, in one-letter code: Flagellar brake protein YcgR 2 (247 aa).

The PilZ domain maps to 124 to 237; that stretch reads QRREYFRVET…DETRIQRYIA (114 aa).

It belongs to the YcgR family. In terms of assembly, monomer. Interacts with the flagellar basal bodies.

It is found in the bacterial flagellum basal body. Functionally, acts as a flagellar brake, regulating swimming and swarming in a bis-(3'-5') cyclic diguanylic acid (c-di-GMP)-dependent manner. Binds 1 c-di-GMP dimer per subunit. Increasing levels of c-di-GMP lead to decreased motility. This is Flagellar brake protein YcgR 2 from Dechloromonas aromatica (strain RCB).